The primary structure comprises 175 residues: Early E1A protein (175 aa).

Positions 40–48 are interaction with RB1 in competition with E2F1; it reads PSLHDLFDL. The LXCXE motif, interaction with host RB1 signature appears at 106–110; sequence LLCLE. Residues 146-164 fold into a zinc finger; the sequence is CLRCAYYQEQGENSICGLC.

This sequence belongs to the adenoviridae E1A protein family. In terms of assembly, interacts with host UBE2I; this interaction interferes with polySUMOylation. Interacts with host RB1; this interaction induces the aberrant dissociation of RB1-E2F1 complex thereby disrupting the activity of RB1 and activating E2F1-regulated genes. Interacts with host ATF7; the interaction enhances ATF7-mediated viral transactivation activity which requires the zinc binding domains of both proteins. Isoform early E1A 32 kDa protein and isoform early E1A 26 kDa protein interact (via N-terminus) with CUL1 and E3 ubiquitin ligase RBX1; these interactions inhibit RBX1-CUL1-dependent elongation reaction of ubiquitin chains and attenuate ubiquitination of SCF(FBXW7) target proteins. Interacts (via PXLXP motif) with host ZMYND11/BS69 (via MYND-type zinc finger); this interaction inhibits E1A mediated transactivation. Interacts with host EP300; this interaction stimulates the acetylation of RB1 by recruiting EP300 and RB1 into a multimeric-protein complex. Interacts with host CTBP1 and CTBP2; this interaction seems to potentiate viral replication. Interacts with host DCAF7. Interacts with host DYRK1A. Interacts with host KPNA4; this interaction allows E1A import into the host nucleus. Interacts with host EP400; this interaction stabilizes MYC. Interacts with host TBP protein; this interaction probably disrupts the TBP-TATA complex.

The protein resides in the host nucleus. In terms of biological role, plays a role in viral genome replication by driving entry of quiescent cells into the cell cycle. Stimulation of progression from G1 to S phase allows the virus to efficiently use the cellular DNA replicating machinery to achieve viral genome replication. E1A protein has both transforming and trans-activating activities. Induces the disassembly of the E2F1 transcription factor from RB1 by direct competition for the same binding site on RB1, with subsequent transcriptional activation of E2F1-regulated S-phase genes and of the E2 region of the adenoviral genome. Release of E2F1 leads to the ARF-mediated inhibition of MDM2 and causes TP53/p53 to accumulate because it is not targeted for degradation by MDM2-mediated ubiquitination anymore. This increase in TP53, in turn, would arrest the cell proliferation and direct its death but this effect is counteracted by the viral protein E1B-55K. Inactivation of the ability of RB1 to arrest the cell cycle is critical for cellular transformation, uncontrolled cellular growth and proliferation induced by viral infection. Interaction with RBX1 and CUL1 inhibits ubiquitination of the proteins targeted by SCF(FBXW7) ubiquitin ligase complex, and may be linked to unregulated host cell proliferation. The tumorigenesis-restraining activity of E1A may be related to the disruption of the host CtBP-CtIP complex through the CtBP binding motif. The sequence is that of Early E1A protein from Canis lupus familiaris (Dog).